Reading from the N-terminus, the 469-residue chain is Glutamate--tRNA ligase (469 aa).

The short motif at Pro11–Asn21 is the 'HIGH' region element. Residues Gln114 to Pro131 show a composition bias toward basic and acidic residues. The interval Gln114 to Pro139 is disordered. The 'KMSKS' region motif lies at Lys243–Arg247. Lys246 contributes to the ATP binding site.

Belongs to the class-I aminoacyl-tRNA synthetase family. Glutamate--tRNA ligase type 1 subfamily. In terms of assembly, monomer.

The protein localises to the cytoplasm. The catalysed reaction is tRNA(Glu) + L-glutamate + ATP = L-glutamyl-tRNA(Glu) + AMP + diphosphate. Functionally, catalyzes the attachment of glutamate to tRNA(Glu) in a two-step reaction: glutamate is first activated by ATP to form Glu-AMP and then transferred to the acceptor end of tRNA(Glu). This is Glutamate--tRNA ligase from Paraburkholderia phytofirmans (strain DSM 17436 / LMG 22146 / PsJN) (Burkholderia phytofirmans).